The following is a 1519-amino-acid chain: DNA (cytosine-5)-methyltransferase 4 (1519 aa).

Over residues 1–24 (MEMETKAGKQKKRSVDSDDDVSKE) the composition is skewed to basic and acidic residues. The tract at residues 1–31 (MEMETKAGKQKKRSVDSDDDVSKERRPKRAA) is disordered. A Glycyl lysine isopeptide (Lys-Gly) (interchain with G-Cter in ubiquitin) cross-link involves residue K583. Residues 641–668 (ENVEEEELEEVEEEDENEEDDPEENELE) form a disordered region. Acidic residues predominate over residues 642–668 (NVEEEELEEVEEEDENEEDDPEENELE). BAH domains are found at residues 715 to 849 (DVVV…FSLP) and 916 to 1033 (TTLK…KQFP). The SAM-dependent MTase C5-type domain occupies 1078 to 1512 (LATLDIFAGC…RKLKEALYLK (435 aa)). C1183 is an active-site residue.

The protein belongs to the class I-like SAM-binding methyltransferase superfamily. C5-methyltransferase family. As to expression, expressed at low levels in vegetative and floral organs.

It localises to the nucleus. It carries out the reaction a 2'-deoxycytidine in DNA + S-adenosyl-L-methionine = a 5-methyl-2'-deoxycytidine in DNA + S-adenosyl-L-homocysteine + H(+). Its function is as follows. Maintains chromatin CpG methylation that plays a role in genomic imprinting, regulation of embryogenesis and seed viability. Required for proper patterns of CG DNA methylation in dividing cells. In Arabidopsis thaliana (Mouse-ear cress), this protein is DNA (cytosine-5)-methyltransferase 4 (MET4).